Reading from the N-terminus, the 228-residue chain is Lipoprotein-releasing system ATP-binding protein LolD (228 aa).

Positions 5-228 (FALSAISKSF…SGTLQNYTDY (224 aa)) constitute an ABC transporter domain. 40–47 (GPSGSGKS) is a binding site for ATP.

This sequence belongs to the ABC transporter superfamily. Lipoprotein translocase (TC 3.A.1.125) family. The complex is composed of two ATP-binding proteins (LolD) and two transmembrane proteins (LolC and LolE).

It is found in the cell inner membrane. Part of the ABC transporter complex LolCDE involved in the translocation of mature outer membrane-directed lipoproteins, from the inner membrane to the periplasmic chaperone, LolA. Responsible for the formation of the LolA-lipoprotein complex in an ATP-dependent manner. The protein is Lipoprotein-releasing system ATP-binding protein LolD of Ehrlichia ruminantium (strain Gardel).